We begin with the raw amino-acid sequence, 374 residues long: Beta sliding clamp (374 aa).

It belongs to the beta sliding clamp family. As to quaternary structure, forms a ring-shaped head-to-tail homodimer around DNA which binds and tethers DNA polymerases and other proteins to the DNA. The DNA replisome complex has a single clamp-loading complex (3 tau and 1 each of delta, delta', psi and chi subunits) which binds 3 Pol III cores (1 core on the leading strand and 2 on the lagging strand) each with a beta sliding clamp dimer. Additional proteins in the replisome are other copies of gamma, psi and chi, Ssb, DNA helicase and RNA primase.

It localises to the cytoplasm. Functionally, confers DNA tethering and processivity to DNA polymerases and other proteins. Acts as a clamp, forming a ring around DNA (a reaction catalyzed by the clamp-loading complex) which diffuses in an ATP-independent manner freely and bidirectionally along dsDNA. Initially characterized for its ability to contact the catalytic subunit of DNA polymerase III (Pol III), a complex, multichain enzyme responsible for most of the replicative synthesis in bacteria; Pol III exhibits 3'-5' exonuclease proofreading activity. The beta chain is required for initiation of replication as well as for processivity of DNA replication. This Helicobacter pylori (strain ATCC 700392 / 26695) (Campylobacter pylori) protein is Beta sliding clamp (dnaN).